The following is a 133-amino-acid chain: Small ribosomal subunit protein uS8 (133 aa).

Belongs to the universal ribosomal protein uS8 family. Part of the 30S ribosomal subunit. Contacts proteins S5 and S12.

Functionally, one of the primary rRNA binding proteins, it binds directly to 16S rRNA central domain where it helps coordinate assembly of the platform of the 30S subunit. In Chloroflexus aurantiacus (strain ATCC 29364 / DSM 637 / Y-400-fl), this protein is Small ribosomal subunit protein uS8.